The primary structure comprises 247 residues: Isoprenyl transferase (247 aa).

D18 is a catalytic residue. D18 contributes to the Mg(2+) binding site. Substrate contacts are provided by residues 19 to 22 (GNGR), W23, R31, H35, and 63 to 65 (SSE). N66 functions as the Proton acceptor in the catalytic mechanism. Substrate contacts are provided by residues W67, R69, R186, and 192-194 (RLS). Mg(2+) is bound at residue E205.

Belongs to the UPP synthase family. In terms of assembly, homodimer. Requires Mg(2+) as cofactor.

Its function is as follows. Catalyzes the condensation of isopentenyl diphosphate (IPP) with allylic pyrophosphates generating different type of terpenoids. This Agrobacterium fabrum (strain C58 / ATCC 33970) (Agrobacterium tumefaciens (strain C58)) protein is Isoprenyl transferase.